Reading from the N-terminus, the 158-residue chain is Small ribosomal subunit protein uS7 (158 aa).

The protein belongs to the universal ribosomal protein uS7 family. In terms of assembly, part of the 30S ribosomal subunit. Contacts proteins S9 and S11.

Functionally, one of the primary rRNA binding proteins, it binds directly to 16S rRNA where it nucleates assembly of the head domain of the 30S subunit. Is located at the subunit interface close to the decoding center, probably blocks exit of the E-site tRNA. The sequence is that of Small ribosomal subunit protein uS7 from Granulibacter bethesdensis (strain ATCC BAA-1260 / CGDNIH1).